We begin with the raw amino-acid sequence, 466 residues long: 55 kDa erythrocyte membrane protein (466 aa).

At threonine 2 the chain carries N-acetylthreonine. Phosphoserine is present on residues serine 13 and serine 19. Position 49 is a phosphothreonine (threonine 49). Serine 52, serine 57, and serine 110 each carry phosphoserine. The PDZ domain occupies leucine 71 to glutamine 152. The SH3 domain maps to alanine 158 to valine 228. Serine 243 is modified (phosphoserine). Residues valine 268–tyrosine 466 are interaction with PALS1. The Guanylate kinase-like domain occupies arginine 282–aspartate 451.

This sequence belongs to the MAGUK family. Heterodimer with PALS1. Interacts with DLG5 and NF2. Interacts (via guanylate kinase-like domain) with WHRN (via third PDZ domain). Palmitoylated.

It localises to the cell membrane. It is found in the cell projection. The protein localises to the stereocilium. Its function is as follows. Essential regulator of neutrophil polarity. Regulates neutrophil polarization by regulating AKT1 phosphorylation through a mechanism that is independent of PIK3CG activity. The protein is 55 kDa erythrocyte membrane protein (MPP1) of Pongo abelii (Sumatran orangutan).